Consider the following 293-residue polypeptide: DNA repair protein RecO (293 aa).

Belongs to the RecO family.

In terms of biological role, involved in DNA repair and RecF pathway recombination. This is DNA repair protein RecO from Cyanothece sp. (strain PCC 7425 / ATCC 29141).